Consider the following 150-residue polypeptide: Macrodomain Ter protein (150 aa).

Belongs to the MatP family. In terms of assembly, homodimer.

Its subcellular location is the cytoplasm. Its function is as follows. Required for spatial organization of the terminus region of the chromosome (Ter macrodomain) during the cell cycle. Prevents early segregation of duplicated Ter macrodomains during cell division. Binds specifically to matS, which is a 13 bp signature motif repeated within the Ter macrodomain. The protein is Macrodomain Ter protein of Escherichia coli O8 (strain IAI1).